The following is a 489-amino-acid chain: Capsid protein (489 aa).

The segment at 79–144 (GETSEEESDS…QPKTIPGQKQ (66 aa)) is disordered. Residues 81–94 (TSEEESDSGEEPEF) show a composition bias toward acidic residues. The segment covering 95–110 (EQVRMDRTGGTEIPKE) has biased composition (basic and acidic residues). A Nuclear localization signal motif is present at residues 122–125 (RKRK). Polar residues predominate over residues 135–144 (QPKTIPGQKQ). The CCHC-type zinc finger occupies 412–429 (CRCWICNIEGHYANECPN). The disordered stretch occupies residues 467-489 (EEEEETSTEESDGSSTSEDSDSD).

This sequence belongs to the caulimoviridae capsid protein family. In terms of assembly, interacts (via nuclear localization signal) with host importin alpha.

The protein resides in the virion. Its subcellular location is the host nucleus. In terms of biological role, self assembles to form an icosahedral capsid, about 50 nm in diameter, nm, composed of 420 subunits of the viral capsid protein. The capsid encapsulates the genomic dsDNA. Following virus entry into host cell, provides nuclear import of the viral genome. Virus particles do not enter the nucleus, but dock at the nuclear membrane through the interaction with host importins. This Arabidopsis thaliana (Mouse-ear cress) protein is Capsid protein.